Reading from the N-terminus, the 533-residue chain is Retinoid isomerohydrolase (533 aa).

S2 carries the N-acetylserine modification. A phosphothreonine mark is found at T101 and T105. C112 carries the S-palmitoyl cysteine; in membrane form lipid modification. N6-acetyllysine is present on K113. S117 is modified (phosphoserine). H180 is a binding site for Fe cation. Residue C231 is the site of S-palmitoyl cysteine; in membrane form attachment. Fe cation is bound by residues H241 and H313. S-palmitoyl cysteine; in membrane form attachment occurs at residues C329 and C330. H527 lines the Fe cation pocket.

This sequence belongs to the carotenoid oxygenase family. As to quaternary structure, interacts with MYO7A; this mediates light-dependent intracellular transport of RPE65. Fe(2+) serves as cofactor. In terms of processing, palmitoylation by LRAT regulates ligand binding specificity; the palmitoylated form (membrane form) specifically binds all-trans-retinyl-palmitate, while the soluble unpalmitoylated form binds all-trans-retinol (vitamin A). Retinal pigment epithelium specific.

Its subcellular location is the cytoplasm. It is found in the cell membrane. It localises to the microsome membrane. The enzyme catalyses an all-trans-retinyl ester + H2O = 11-cis-retinol + a fatty acid + H(+). It carries out the reaction lutein = (3R,3'S)-zeaxanthin. The catalysed reaction is all-trans-retinyl hexadecanoate + H2O = 11-cis-retinol + hexadecanoate + H(+). In terms of biological role, critical isomerohydrolase in the retinoid cycle involved in regeneration of 11-cis-retinal, the chromophore of rod and cone opsins. Catalyzes the cleavage and isomerization of all-trans-retinyl fatty acid esters to 11-cis-retinol which is further oxidized by 11-cis retinol dehydrogenase to 11-cis-retinal for use as visual chromophore. Essential for the production of 11-cis retinal for both rod and cone photoreceptors. Also capable of catalyzing the isomerization of lutein to meso-zeaxanthin an eye-specific carotenoid. The soluble form binds vitamin A (all-trans-retinol), making it available for LRAT processing to all-trans-retinyl ester. The membrane form, palmitoylated by LRAT, binds all-trans-retinyl esters, making them available for IMH (isomerohydrolase) processing to all-cis-retinol. The soluble form is regenerated by transferring its palmitoyl groups onto 11-cis-retinol, a reaction catalyzed by LRAT. This is Retinoid isomerohydrolase (RPE65) from Bos taurus (Bovine).